A 333-amino-acid polypeptide reads, in one-letter code: Probable G-protein coupled receptor 33 (333 aa).

At 1 to 30 (MDLINSTDYLINASTLVRNSTQFLAPASKM) the chain is on the extracellular side. N-linked (GlcNAc...) asparagine glycans are attached at residues N5, N12, and N19. Residues 31-53 (IIALSLYISSIIGTITNGLYLWV) form a helical membrane-spanning segment. Residues 54–64 (LRFKMKQTVNT) lie on the Cytoplasmic side of the membrane. Residues 65-86 (LLFFHLILSYFISTMILPFMAT) traverse the membrane as a helical segment. The Extracellular portion of the chain corresponds to 87-103 (SQLQDNHWNFGTALCKV). An intrachain disulfide couples C101 to C179. The helical transmembrane segment at 104–124 (FNGTLSLGMFTSVFFLSAIGL) threads the bilayer. The Cytoplasmic segment spans residues 125 to 143 (DRYLLTLHPVWSQQHRTPR). A helical membrane pass occupies residues 144–165 (WASSIVLGVWISAAALSIPYLI). Residues 166–209 (FRETHHDRKGKVTCQNNYAVSTNWESKEMQASRQWIHVACFISR) lie on the Extracellular side of the membrane. Residues 210–230 (FLLGFLLPFFIIIFCYERVAS) traverse the membrane as a helical segment. At 231-246 (KVKERSLFKSSKPFKV) the chain is on the cytoplasmic side. A helical membrane pass occupies residues 247–268 (MMTAIISFFVCWMPYHIHQGLL). Residues 269–283 (LTTNQSLLLELTLIL) are Extracellular-facing. N-linked (GlcNAc...) asparagine glycosylation is present at N272. The chain crosses the membrane as a helical span at residues 284 to 303 (TVLTTSFNTIFSPTLYLFVG). The Cytoplasmic portion of the chain corresponds to 304 to 333 (ENFKKVFKKSILALFESTFSEDSSVERTQT).

The protein belongs to the G-protein coupled receptor 1 family. Expressed in spleen, lung, heart, liver, kidney, pancreas, thymus, gonads and leukocytes.

Its subcellular location is the cell membrane. Functionally, orphan receptor; could be a chemoattractant receptor. The protein is Probable G-protein coupled receptor 33 (GPR33) of Homo sapiens (Human).